Here is an 84-residue protein sequence, read N- to C-terminus: RNA-binding protein Hfq (84 aa).

One can recognise a Sm domain in the interval 11 to 71 (DVFLNFIRKN…ISTVMPSTPI (61 aa)).

It belongs to the Hfq family. Homohexamer.

Its function is as follows. RNA chaperone that binds small regulatory RNA (sRNAs) and mRNAs to facilitate mRNA translational regulation in response to envelope stress, environmental stress and changes in metabolite concentrations. Also binds with high specificity to tRNAs. This is RNA-binding protein Hfq from Paramagnetospirillum magneticum (strain ATCC 700264 / AMB-1) (Magnetospirillum magneticum).